The sequence spans 623 residues: Chaperone protein DnaK (623 aa).

T197 bears the Phosphothreonine; by autocatalysis mark. Positions 600-623 are disordered; the sequence is KKDENAGANGGNKKDDDVIDAEVE.

Belongs to the heat shock protein 70 family.

Its function is as follows. Acts as a chaperone. The chain is Chaperone protein DnaK from Campylobacter concisus (strain 13826).